We begin with the raw amino-acid sequence, 119 residues long: Large ribosomal subunit protein uL18 (119 aa).

The protein belongs to the universal ribosomal protein uL18 family. As to quaternary structure, part of the 50S ribosomal subunit; part of the 5S rRNA/L5/L18/L25 subcomplex. Contacts the 5S and 23S rRNAs.

Its function is as follows. This is one of the proteins that bind and probably mediate the attachment of the 5S RNA into the large ribosomal subunit, where it forms part of the central protuberance. This chain is Large ribosomal subunit protein uL18, found in Anaeromyxobacter dehalogenans (strain 2CP-1 / ATCC BAA-258).